The following is a 232-amino-acid chain: Large ribosomal subunit protein uL3 (232 aa).

The protein belongs to the universal ribosomal protein uL3 family. In terms of assembly, part of the 50S ribosomal subunit. Forms a cluster with proteins L14 and L19.

Its function is as follows. One of the primary rRNA binding proteins, it binds directly near the 3'-end of the 23S rRNA, where it nucleates assembly of the 50S subunit. In Sorangium cellulosum (strain So ce56) (Polyangium cellulosum (strain So ce56)), this protein is Large ribosomal subunit protein uL3.